The following is a 323-amino-acid chain: D-alanine--D-alanine ligase (323 aa).

Residues 105–305 enclose the ATP-grasp domain; sequence KQQLVPRGIP…YEDLVEAIVE (201 aa). 131-188 contacts ATP; the sequence is PLARPYVLKPVNEGSSVGVAIVTDESNYGNPIRRDAPGPWQEFRELLAEPFIRGRELT. The Mg(2+) site is built by Asp256, Glu272, and Asn274.

The protein belongs to the D-alanine--D-alanine ligase family. It depends on Mg(2+) as a cofactor. The cofactor is Mn(2+).

The protein resides in the cytoplasm. The catalysed reaction is 2 D-alanine + ATP = D-alanyl-D-alanine + ADP + phosphate + H(+). It participates in cell wall biogenesis; peptidoglycan biosynthesis. Its function is as follows. Cell wall formation. This chain is D-alanine--D-alanine ligase, found in Erythrobacter litoralis (strain HTCC2594).